A 127-amino-acid polypeptide reads, in one-letter code: Fluoride-specific ion channel FluC (127 aa).

A run of 4 helical transmembrane segments spans residues 4–24, 36–56, 68–88, and 99–119; these read SILA…FLGL, GTLL…AYFA, LIIT…AEVV, and AAGA…LGLF. Na(+) contacts are provided by glycine 75 and threonine 78.

It belongs to the fluoride channel Fluc/FEX (TC 1.A.43) family.

The protein resides in the cell inner membrane. The enzyme catalyses fluoride(in) = fluoride(out). Its activity is regulated as follows. Na(+) is not transported, but it plays an essential structural role and its presence is essential for fluoride channel function. In terms of biological role, fluoride-specific ion channel. Important for reducing fluoride concentration in the cell, thus reducing its toxicity. The protein is Fluoride-specific ion channel FluC of Pseudomonas paraeruginosa (strain DSM 24068 / PA7) (Pseudomonas aeruginosa (strain PA7)).